Consider the following 859-residue polypeptide: Linoleate 9S-lipoxygenase 1 (859 aa).

A PLAT domain is found at 21–161; it reads VKGTVVLMKK…HYTTDRVFFS (141 aa). In terms of domain architecture, Lipoxygenase spans 164–859; it reads TYLPHETPAT…GRGIPNSVSI (696 aa). Residues 213 to 246 form a disordered region; sequence KNPRPVLGGTQEYPYPRRGRTGRKPTKEDPQTES. Fe cation contacts are provided by histidine 519, histidine 524, histidine 711, asparagine 715, and isoleucine 859.

This sequence belongs to the lipoxygenase family. Monomer. The cofactor is Fe cation. As to expression, seedlings, roots, leaves, and flowers (at protein level). Expressed in guard cells.

Its subcellular location is the cytoplasm. It catalyses the reaction (9Z,12Z)-octadecadienoate + O2 = (9S)-hydroperoxy-(10E,12Z)-octadecadienoate. The catalysed reaction is (9Z,12Z,15Z)-octadecatrienoate + O2 = (9S)-hydroperoxy-(10E,12Z,15Z)-octadecatrienoate. The protein operates within lipid metabolism; oxylipin biosynthesis. 9S-lipoxygenase that can use linoleic acid or linolenic acid as substrates. Plant lipoxygenases may be involved in a number of diverse aspects of plant physiology including growth and development, pest resistance, and senescence or responses to wounding. Catalyzes the hydroperoxidation of lipids containing a cis,cis-1,4-pentadiene structure. Function as regulators of root development by controlling the emergence of lateral roots. 9S-lypoxygenase-derived oxylipins may play an antagonistic role to ethylene signaling in the control of responses involving oxidative stress, lipid peroxidation and plant defense. LOX1-derived oxylipins may be involved in stress signaling from roots to shoots in response to cadmium exposure. 9S-lypoxygenase-derived oxylipins are engaged during infection to control the balance between salicylic acid (SA) and jasmonate (JA) signaling to facilitate infection by the fungal pathogen Fusarium graminearum. 9S-lypoxygenase-derived oxylipins activate brassinosteroid signaling to promote cell wall-based defense and limit pathogen infection. The LOX1-derived compound (9S)-hydroperoxy-(10E,12Z,15Z)-octadecatrienoate protects plant tissues against infection by the bacterial pathogen Pseudomonas syringae pv tomato DC3000. The LOX1-derived oxylipins are required to trigger stomatal closure in response to both infection by the bacterial pathogen Pseudomonas syringae pv tomato DC3000, and the pathogen-associated molecular pattern (PAMP) flagellin peptide flg22. Contributes to the oxidation of free fatty acids during seed aging. The polypeptide is Linoleate 9S-lipoxygenase 1 (Arabidopsis thaliana (Mouse-ear cress)).